A 277-amino-acid polypeptide reads, in one-letter code: 3-methyl-2-oxobutanoate hydroxymethyltransferase (277 aa).

Residues Asp49 and Asp88 each coordinate Mg(2+). 3-methyl-2-oxobutanoate-binding positions include 49–50 (DS), Asp88, and Lys118. A Mg(2+)-binding site is contributed by Glu120. Residue Glu186 is the Proton acceptor of the active site.

This sequence belongs to the PanB family. Homodecamer; pentamer of dimers. Requires Mg(2+) as cofactor.

Its subcellular location is the cytoplasm. It catalyses the reaction 3-methyl-2-oxobutanoate + (6R)-5,10-methylene-5,6,7,8-tetrahydrofolate + H2O = 2-dehydropantoate + (6S)-5,6,7,8-tetrahydrofolate. The protein operates within cofactor biosynthesis; (R)-pantothenate biosynthesis; (R)-pantoate from 3-methyl-2-oxobutanoate: step 1/2. Its function is as follows. Catalyzes the reversible reaction in which hydroxymethyl group from 5,10-methylenetetrahydrofolate is transferred onto alpha-ketoisovalerate to form ketopantoate. This is 3-methyl-2-oxobutanoate hydroxymethyltransferase from Cereibacter sphaeroides (strain ATCC 17029 / ATH 2.4.9) (Rhodobacter sphaeroides).